We begin with the raw amino-acid sequence, 750 residues long: Photosystem I P700 chlorophyll a apoprotein A1 (750 aa).

A run of 8 helical transmembrane segments spans residues 70–93 (VFSA…FHGA), 156–179 (LYCT…FHYH), 195–219 (LNHH…HVSL), 291–309 (IAHH…GHMY), 346–369 (WHAQ…HHMY), 385–411 (LSLF…IFMV), 433–455 (AIIS…LYIH), and 531–549 (FLVH…LILL). Cys-573 and Cys-582 together coordinate [4Fe-4S] cluster. 2 helical membrane passes run 589–610 (HVFL…HFSW) and 664–686 (LSAY…MFLF). Chlorophyll a' is bound at residue His-675. Residues Met-683 and Tyr-691 each coordinate chlorophyll a. A phylloquinone-binding site is contributed by Trp-692. The chain crosses the membrane as a helical span at residues 724–744 (TVGVTHYLLGGIATTWAFFLA).

Belongs to the PsaA/PsaB family. In terms of assembly, the PsaA/B heterodimer binds the P700 chlorophyll special pair and subsequent electron acceptors. PSI consists of a core antenna complex that captures photons, and an electron transfer chain that converts photonic excitation into a charge separation. The eukaryotic PSI reaction center is composed of at least 11 subunits. It depends on P700 is a chlorophyll a/chlorophyll a' dimer, A0 is one or more chlorophyll a, A1 is one or both phylloquinones and FX is a shared 4Fe-4S iron-sulfur center. as a cofactor.

The protein localises to the plastid. Its subcellular location is the chloroplast thylakoid membrane. The enzyme catalyses reduced [plastocyanin] + hnu + oxidized [2Fe-2S]-[ferredoxin] = oxidized [plastocyanin] + reduced [2Fe-2S]-[ferredoxin]. In terms of biological role, psaA and PsaB bind P700, the primary electron donor of photosystem I (PSI), as well as the electron acceptors A0, A1 and FX. PSI is a plastocyanin-ferredoxin oxidoreductase, converting photonic excitation into a charge separation, which transfers an electron from the donor P700 chlorophyll pair to the spectroscopically characterized acceptors A0, A1, FX, FA and FB in turn. Oxidized P700 is reduced on the lumenal side of the thylakoid membrane by plastocyanin. The polypeptide is Photosystem I P700 chlorophyll a apoprotein A1 (Oenothera elata subsp. hookeri (Hooker's evening primrose)).